A 224-amino-acid chain; its full sequence is Casparian strip membrane protein 1 (224 aa).

Positions 1 to 22 (MSSGEPAAVSIPIHDHHGKAPA) are disordered. Residues 1–62 (MSSGEPAAVS…RGDHHRGSRC (62 aa)) lie on the Cytoplasmic side of the membrane. The chain crosses the membrane as a helical span at residues 63–83 (LAFLDFILRIAAFGPALAAAI). The Extracellular portion of the chain corresponds to 84 to 110 (STGTSDETLSVFTEFYQFRARFDDFPA). Residues 111–131 (FLFFLVANAIVAGYLVLSLPF) traverse the membrane as a helical segment. At 132–145 (SAVLVIRPQTIGLR) the chain is on the cytoplasmic side. Residues 146-166 (LLLLVCDMIMAAMLTAAASAA) traverse the membrane as a helical segment. Residues 167–200 (AAIVDLAHNGNLRANWVAICMQFHGFCQRTSGSV) lie on the Extracellular side of the membrane. A helical membrane pass occupies residues 201-221 (VASFLTVVILMFLVILAACSI). Residues 222–224 (RKR) are Cytoplasmic-facing.

It belongs to the Casparian strip membrane proteins (CASP) family. As to quaternary structure, homodimer and heterodimers.

The protein resides in the cell membrane. Regulates membrane-cell wall junctions and localized cell wall deposition. Required for establishment of the Casparian strip membrane domain (CSD) and the subsequent formation of Casparian strips, a cell wall modification of the root endodermis that determines an apoplastic barrier between the intraorganismal apoplasm and the extraorganismal apoplasm and prevents lateral diffusion. This Oryza sativa subsp. indica (Rice) protein is Casparian strip membrane protein 1.